A 227-amino-acid polypeptide reads, in one-letter code: PKHD-type hydroxylase BamMC406_5004 (227 aa).

In terms of domain architecture, Fe2OG dioxygenase spans 80-179; the sequence is QVYPPLFNRY…RVASFFWVQS (100 aa). 3 residues coordinate Fe cation: histidine 98, aspartate 100, and histidine 160. A 2-oxoglutarate-binding site is contributed by arginine 170.

The cofactor is Fe(2+). It depends on L-ascorbate as a cofactor.

The protein is PKHD-type hydroxylase BamMC406_5004 of Burkholderia ambifaria (strain MC40-6).